The sequence spans 226 residues: Small ribosomal subunit protein uS2c (226 aa).

The protein belongs to the universal ribosomal protein uS2 family.

It is found in the plastid. The protein localises to the chloroplast. This chain is Small ribosomal subunit protein uS2c (rps2), found in Phaeodactylum tricornutum (strain CCAP 1055/1).